The primary structure comprises 219 residues: Glutathione S-transferase 3 (219 aa).

Positions 3–82 (DEVVLLDTWA…YIDEVWNDKS (80 aa)) constitute a GST N-terminal domain. Residues Ser-13, Ile-54, and 66–67 (ES) contribute to the glutathione site. One can recognise a GST C-terminal domain in the interval 88–216 (DPYKRSQARF…GLIVELQKTL (129 aa)).

Belongs to the GST superfamily. HSP26 family. As to quaternary structure, homodimer. degradation; (R)-lactate from methylglyoxal: step 1/2.

The enzyme catalyses RX + glutathione = an S-substituted glutathione + a halide anion + H(+). Its function is as follows. Conjugation of reduced glutathione to a wide number of exogenous and endogenous hydrophobic electrophiles. Involved in the detoxification of certain herbicides. This Glycine max (Soybean) protein is Glutathione S-transferase 3 (GST3).